The chain runs to 85 residues: RNA-binding protein Hfq (85 aa).

The 60-residue stretch at 9–68 (DPFLNALRRERIPVSIYLVNGIKLQGQIESFDQFVVLLKNTVSQMVYKHAISTVVPARIP) folds into the Sm domain.

Belongs to the Hfq family. Homohexamer.

Its function is as follows. RNA chaperone that binds small regulatory RNA (sRNAs) and mRNAs to facilitate mRNA translational regulation in response to envelope stress, environmental stress and changes in metabolite concentrations. Also binds with high specificity to tRNAs. This Idiomarina loihiensis (strain ATCC BAA-735 / DSM 15497 / L2-TR) protein is RNA-binding protein Hfq.